We begin with the raw amino-acid sequence, 326 residues long: MNLPTKIFFTSFIFGFILSPYFIKFLKKISKNGQPIRLCSPENHLITKRNTPTMGGVVILTSSLLPILFWVQSTPEILLLVSITLSFALIGFIDDYLKLKANSYRGLSAKTKILIQFIVALVGMSVFKLYFTEDFTKTFLFKGIMIDFSYLYAPFAAFIVVGSSNAVNLTDGLDGLAATQIIASFVSLGLVAYMTRADISVILFCITFIGATLSFLWFNTHPAKIFMGDIGSLSIGAALGLTSVLIKREVLFAVIGVIFVIETLSVVIQVLYFKYTRFKHGKGKRIFLMTPIHHHFEKKGWSENEIVIKFLIITIVCSVFTVAFLL.

The next 10 helical transmembrane spans lie at Leu3–Ile23, Thr51–Val71, Ile77–Leu97, Ile113–Glu133, Gly143–Ser163, Gly175–Thr195, Ile199–Asn219, Ile225–Leu245, Val250–Val270, and Ile306–Leu326.

The protein belongs to the glycosyltransferase 4 family. MraY subfamily. Requires Mg(2+) as cofactor.

Its subcellular location is the cell membrane. The enzyme catalyses UDP-N-acetyl-alpha-D-muramoyl-L-alanyl-gamma-D-glutamyl-meso-2,6-diaminopimeloyl-D-alanyl-D-alanine + di-trans,octa-cis-undecaprenyl phosphate = di-trans,octa-cis-undecaprenyl diphospho-N-acetyl-alpha-D-muramoyl-L-alanyl-D-glutamyl-meso-2,6-diaminopimeloyl-D-alanyl-D-alanine + UMP. It participates in cell wall biogenesis; peptidoglycan biosynthesis. Catalyzes the initial step of the lipid cycle reactions in the biosynthesis of the cell wall peptidoglycan: transfers peptidoglycan precursor phospho-MurNAc-pentapeptide from UDP-MurNAc-pentapeptide onto the lipid carrier undecaprenyl phosphate, yielding undecaprenyl-pyrophosphoryl-MurNAc-pentapeptide, known as lipid I. The chain is Phospho-N-acetylmuramoyl-pentapeptide-transferase from Wolbachia sp. subsp. Brugia malayi (strain TRS).